Consider the following 242-residue polypeptide: Terpene cyclase dpchB (242 aa).

A run of 7 helical transmembrane segments spans residues 16–36 (VVWIADTCKLIMGIGWTANYV), 51–71 (ALLPLCCNFAWELTYAIMYAF), 78–95 (YVHFSGLLLNCGVMYTAV), 114–134 (LIFVLAVAGFASAHVVLAKQV), 141–161 (AWSAYACQLLLSVGGLCQLLC), 169–189 (SYFLWFSRFFGSLVLVPQDII), and 207–227 (IWFVTIFLILDGSYGLCLWYV).

This sequence belongs to the paxB family.

Its subcellular location is the membrane. It functions in the pathway secondary metabolite biosynthesis; terpenoid biosynthesis. Terpene cyclase; part of the gene cluster that mediates the biosynthesis of the diterpenoid pyrones higginsianins A and B. The first step of the pathway is the synthesis of the alpha-pyrone moiety by the polyketide synthase dpchA via condensation of one acetyl-CoA starter unit with 3 malonyl-CoA units and 2 methylations. The alpha-pyrone is then combined with geranylgeranyl pyrophosphate (GGPP) formed by the GGPP synthase dpchD through the action of the prenyltransferase dpchC to yield a linear alpha-pyrone diterpenoid. Subsequent steps in the diterpenoid pyrone biosynthetic pathway involve the decalin core formation, which is initiated by the epoxidation of the C10-C11 olefin by the FAD-dependent oxidoreductase dpchE, and is followed by a cyclization cascade catalyzed by the terpene cyclase dpchB. The short chain dehydrogenase/reductase dpchG then oxidizes the 8S hydroxy group to a ketone and the short chain dehydrogenase/reductase dpchH reduces the ketone to the 8R hydroxy group to yield higginsianin B. Finally, the FAD-dependent oxidoreductase dpchF converts higginsianin B into higginsianin A. This Colletotrichum higginsianum (strain IMI 349063) (Crucifer anthracnose fungus) protein is Terpene cyclase dpchB.